Reading from the N-terminus, the 453-residue chain is Indoleamine 2,3-dioxygenase (453 aa).

Residue H331 coordinates heme.

Belongs to the indoleamine 2,3-dioxygenase family. Heme is required as a cofactor.

It carries out the reaction D-tryptophan + O2 = N-formyl-D-kynurenine. It catalyses the reaction L-tryptophan + O2 = N-formyl-L-kynurenine. It functions in the pathway cofactor biosynthesis; NAD(+) biosynthesis. Its function is as follows. Catalyzes the first step in tryptophan catabolism in order to supply de novo nicotinamide adenine dinucleotide (NAD(+)) via the kynurenine pathway. Plays a role in the cellular response to telomere uncapping. The protein is Indoleamine 2,3-dioxygenase (BNA2) of Saccharomyces cerevisiae (strain ATCC 204508 / S288c) (Baker's yeast).